The sequence spans 816 residues: Nicotine 6-hydroxylase large subunit (816 aa).

E745 contacts Mo-molybdopterin cytosine dinucleotide.

The protein belongs to the xanthine dehydrogenase family. Heterotrimer composed of a large subunit (NdhL), a medium subunit (NdhM) and a small subunit (NdhS). It depends on Mo-molybdopterin cytosine dinucleotide as a cofactor.

Its subcellular location is the cytoplasm. The enzyme catalyses (R)-nicotine + A + H2O = (R)-6-hydroxynicotine + AH2. The catalysed reaction is (S)-nicotine + A + H2O = (S)-6-hydroxynicotine + AH2. It functions in the pathway alkaloid degradation; nicotine degradation; 6-hydroxypseudooxynicotine from nicotine (R-isomer route): step 1/2. Its pathway is alkaloid degradation; nicotine degradation; 6-hydroxypseudooxynicotine from nicotine (S-isomer route): step 1/2. Nicotine dehydrogenase activity is inhibited by tungsten. Component of the nicotine 6-hydroxylase, which is involved in the degradation of nicotine. Catalyzes the hydroxylation of the pyridine ring at C6 to form 6-hydroxynicotine. Can use both L-nicotine and D-nicotine. The protein is Nicotine 6-hydroxylase large subunit of Paenarthrobacter nicotinovorans (Arthrobacter nicotinovorans).